Reading from the N-terminus, the 913-residue chain is Protein translocase subunit SecA (913 aa).

ATP-binding positions include glutamine 87, 105–109 (GEGKT), and aspartate 512. Cysteine 897, cysteine 899, cysteine 908, and histidine 909 together coordinate Zn(2+).

Belongs to the SecA family. As to quaternary structure, monomer and homodimer. Part of the essential Sec protein translocation apparatus which comprises SecA, SecYEG and auxiliary proteins SecDF-YajC and YidC. Zn(2+) is required as a cofactor.

Its subcellular location is the cell inner membrane. The protein localises to the cytoplasm. It carries out the reaction ATP + H2O + cellular proteinSide 1 = ADP + phosphate + cellular proteinSide 2.. In terms of biological role, part of the Sec protein translocase complex. Interacts with the SecYEG preprotein conducting channel. Has a central role in coupling the hydrolysis of ATP to the transfer of proteins into and across the cell membrane, serving both as a receptor for the preprotein-SecB complex and as an ATP-driven molecular motor driving the stepwise translocation of polypeptide chains across the membrane. The polypeptide is Protein translocase subunit SecA (Pseudomonas syringae pv. syringae (strain B728a)).